We begin with the raw amino-acid sequence, 880 residues long: Calcium-transporting ATPase lmo0841 (880 aa).

The next 4 membrane-spanning stretches (helical) occupy residues 47–67 (LWKLFLETFKDPMVIVLVIAA), 68–88 (LVQLVLGEVVESLIIFLVLIV), 243–263 (LGLGILALCVLIFAVEAGRVL), and 271–291 (MATAILNAFMFAVAVAVAAIP). Positions 287, 288, 290, and 292 each coordinate Ca(2+). The active-site 4-aspartylphosphate intermediate is the Asp-334. 5 helical membrane passes run 681–701 (IAYLFAGNLGAIIAILFALVL), 707–727 (FTALQLLFINLVNDSLPAIAL), 756–776 (AVISRGVLIGIAVIISQYIGM), 819–839 (YVIGAVLLCFVLYGITVLPGA), and 854–874 (WSIAAGLALAAVVMMEIIKVV). Asn-716 and Asp-720 together coordinate Ca(2+).

Belongs to the cation transport ATPase (P-type) (TC 3.A.3) family. Type IIA subfamily.

The protein localises to the cell membrane. The enzyme catalyses Ca(2+)(in) + ATP + H2O = Ca(2+)(out) + ADP + phosphate + H(+). With respect to regulation, phosphorylation is inhibited by EGTA and vanadate. ATPase activity is stimulated by Sr(2+). Inhibited by very high concentrations of cyclopiazonic acid (CPA). Catalyzes the hydrolysis of ATP coupled with the transport of calcium. The transport is electrogenic with a probable ATP:Ca(2+):H(+) stoichiometry of 1:1:1. May have an important role in survival of the bacterium when stressed by a combination of a high calcium concentration and alkaline pH. This is Calcium-transporting ATPase lmo0841 from Listeria monocytogenes serovar 1/2a (strain ATCC BAA-679 / EGD-e).